A 314-amino-acid chain; its full sequence is 3'-5' exoribonuclease YhaM (314 aa).

The HD domain maps to 163–279 (HVVSMLDLAK…LHYIDNLDAK (117 aa)).

It belongs to the YhaM family.

Its function is as follows. Shows a 3'-5' exoribonuclease activity. This chain is 3'-5' exoribonuclease YhaM, found in Bacillus cereus (strain AH187).